Consider the following 366-residue polypeptide: tRNA-specific 2-thiouridylase MnmA (366 aa).

ATP contacts are provided by residues glycine 10–serine 17 and isoleucine 36. Residue cysteine 98 is the Nucleophile of the active site. Cysteine 98 and cysteine 194 are oxidised to a cystine. Glycine 122 contributes to the ATP binding site. Positions lysine 144–glutamine 146 are interaction with tRNA. The active-site Cysteine persulfide intermediate is the cysteine 194. The tract at residues arginine 303–tyrosine 304 is interaction with tRNA.

This sequence belongs to the MnmA/TRMU family.

The protein localises to the cytoplasm. It catalyses the reaction S-sulfanyl-L-cysteinyl-[protein] + uridine(34) in tRNA + AH2 + ATP = 2-thiouridine(34) in tRNA + L-cysteinyl-[protein] + A + AMP + diphosphate + H(+). Functionally, catalyzes the 2-thiolation of uridine at the wobble position (U34) of tRNA, leading to the formation of s(2)U34. The chain is tRNA-specific 2-thiouridylase MnmA from Chlorobaculum tepidum (strain ATCC 49652 / DSM 12025 / NBRC 103806 / TLS) (Chlorobium tepidum).